A 282-amino-acid polypeptide reads, in one-letter code: Deoxyribonuclease-1 (282 aa).

An N-terminal signal peptide occupies residues 1-22 (MRGTRLMGLLLALAGLLQLGLS). Residue asparagine 40 is glycosylated (N-linked (GlcNAc...) asparagine). Glutamate 100 is a catalytic residue. A disulfide bridge links cysteine 123 with cysteine 126. Residue histidine 156 is part of the active site. Residues cysteine 195 and cysteine 231 are joined by a disulfide bond.

The protein belongs to the DNase I family. Requires Ca(2+) as cofactor. It depends on Mg(2+) as a cofactor. Post-translationally, the only differences between the A and B forms and the C and D forms are in the compositions of the carbohydrate bound to Asn-40.

It localises to the secreted. The protein localises to the zymogen granule. Its subcellular location is the nucleus envelope. The catalysed reaction is Endonucleolytic cleavage to 5'-phosphodinucleotide and 5'-phosphooligonucleotide end-products.. In terms of biological role, serum endocuclease secreted into body fluids by a wide variety of exocrine and endocrine organs. Expressed by non-hematopoietic tissues and preferentially cleaves protein-free DNA. Among other functions, seems to be involved in cell death by apoptosis. Binds specifically to G-actin and blocks actin polymerization. Together with DNASE1L3, plays a key role in degrading neutrophil extracellular traps (NETs). NETs are mainly composed of DNA fibers and are released by neutrophils to bind pathogens during inflammation. Degradation of intravascular NETs by DNASE1 and DNASE1L3 is required to prevent formation of clots that obstruct blood vessels and cause organ damage following inflammation. The protein is Deoxyribonuclease-1 (DNASE1) of Bos taurus (Bovine).